Here is a 137-residue protein sequence, read N- to C-terminus: Large ribosomal subunit protein uL16 (137 aa).

Belongs to the universal ribosomal protein uL16 family. In terms of assembly, part of the 50S ribosomal subunit.

Its function is as follows. Binds 23S rRNA and is also seen to make contacts with the A and possibly P site tRNAs. The chain is Large ribosomal subunit protein uL16 from Coxiella burnetii (strain RSA 331 / Henzerling II).